We begin with the raw amino-acid sequence, 328 residues long: GMP reductase (328 aa).

The active-site Thioimidate intermediate is the cysteine 176. 205-228 (IIADGGIRTHGDVAKSIRFGATMV) provides a ligand contact to NADP(+).

It belongs to the IMPDH/GMPR family. GuaC type 2 subfamily.

The enzyme catalyses IMP + NH4(+) + NADP(+) = GMP + NADPH + 2 H(+). Catalyzes the irreversible NADPH-dependent deamination of GMP to IMP. It functions in the conversion of nucleobase, nucleoside and nucleotide derivatives of G to A nucleotides, and in maintaining the intracellular balance of A and G nucleotides. The sequence is that of GMP reductase from Bacillus thuringiensis (strain Al Hakam).